The sequence spans 465 residues: GDNF family receptor alpha-1 (465 aa).

Positions Met1 to Gly24 are cleaved as a signal peptide. 3 repeat units span residues Asp25–Asn113, Lys150–Arg238, and Glu239–Ile342. Cys36 and Cys42 form a disulfide bridge. Asn59 is a glycosylation site (N-linked (GlcNAc...) asparagine). 10 cysteine pairs are disulfide-bonded: Cys154–Cys214, Cys161–Cys167, Cys178–Cys192, Cys187–Cys233, Cys216–Cys221, Cys243–Cys313, Cys250–Cys256, Cys267–Cys285, Cys277–Cys337, and Cys315–Cys325. Residues Asn347 and Asn406 are each glycosylated (N-linked (GlcNAc...) asparagine). Ser429 carries GPI-anchor amidated serine lipidation. Residues His430–Ser465 constitute a propeptide, removed in mature form.

This sequence belongs to the GDNFR family. Interacts with GDNF ligand and RET: forms a 2:2:2 ternary complex composed of GDNF ligand, GFRA1 and RET receptor. Interacts with SORL1, either alone or in complex with GDNF. Interaction between SORL1 and GFRA1 leads to GFRA1 internalization, but not degradation.

The protein resides in the cell membrane. The protein localises to the golgi apparatus. It is found in the trans-Golgi network. Its subcellular location is the endosome. It localises to the multivesicular body. Its function is as follows. Coreceptor for GDNF, a neurotrophic factor that enhances survival and morphological differentiation of dopaminergic neurons and increases their high-affinity dopamine uptake. GDNF-binding leads to autophosphorylation and activation of the RET receptor. The protein is GDNF family receptor alpha-1 (GFRA1) of Homo sapiens (Human).